The following is a 405-amino-acid chain: Accessory Sec system protein translocase subunit SecY2 (405 aa).

A run of 10 helical transmembrane segments spans residues 14 to 34 (MCTL…LPFV), 65 to 85 (LFSI…MFSF), 104 to 124 (MYLT…NLPV), 131 to 151 (FLVF…LVWL), 156 to 176 (ATIG…ASLP), 190 to 210 (LGLL…VVLF), 243 to 263 (GMPY…LLLL), 285 to 305 (PLWI…FAFV), 343 to 363 (FALI…LFVL), and 368 to 388 (LLKV…LFTI).

It belongs to the SecY/SEC61-alpha family. SecY2 subfamily. In terms of assembly, component of the accessory SecA2/SecY2 protein translocase complex required to export cell wall proteins. May form heterotrimers with SecE and SecG subunits.

The protein localises to the cell membrane. Part of the accessory SecA2/SecY2 system specifically required for export of possible cell wall proteins. The central subunit of a protein translocation channel. This chain is Accessory Sec system protein translocase subunit SecY2, found in Streptococcus oralis (strain Uo5).